Consider the following 313-residue polypeptide: Formimidoylglutamase (313 aa).

Mn(2+) is bound by residues His-130, Asp-155, His-157, Asp-159, Asp-241, and Asp-243.

The protein belongs to the arginase family. Mn(2+) serves as cofactor.

The catalysed reaction is N-formimidoyl-L-glutamate + H2O = formamide + L-glutamate. It functions in the pathway amino-acid degradation; L-histidine degradation into L-glutamate; L-glutamate from N-formimidoyl-L-glutamate (hydrolase route): step 1/1. In terms of biological role, catalyzes the conversion of N-formimidoyl-L-glutamate to L-glutamate and formamide. The chain is Formimidoylglutamase from Salmonella typhi.